Consider the following 411-residue polypeptide: Cytochrome P450 monooxygenase sirE (411 aa).

Residues Asn-12 and Asn-149 are each glycosylated (N-linked (GlcNAc...) asparagine). A helical transmembrane segment spans residues 181 to 203; it reads FLNVISIFTVMMASLNVLYDILA. A glycan (N-linked (GlcNAc...) asparagine) is linked at Asn-342. Heme is bound at residue Cys-352.

This sequence belongs to the cytochrome P450 family. The cofactor is heme.

It localises to the membrane. The protein operates within mycotoxin biosynthesis. In terms of biological role, cytochrome P450 monooxygenase; part of the gene cluster that mediates the biosynthesis of sirodesmin PL, an epipolythiodioxopiperazine (ETP) characterized by a disulfide bridged cyclic dipeptide and that acts as a phytotoxin which is involved in the blackleg didease of canola. SirD catalyzes the O-prenylation of L-tyrosine (L-Tyr) in the presence of dimethylallyl diphosphate (DMAPP) to yield 4-O-dimethylallyl-L-Tyr, and therefore represents probably the first pathway-specific enzyme in the biosynthesis of sirodesmin PL. 4-O-dimethylallyl-L-Tyr, then undergoes condensation with L-Ser in a reaction catalyzed by the non-ribosomal peptide synthase sirP to form the diketopiperazine (DKP) backbone. Further bishydroxylation of the DKP performed by the cytochrome P450 monooxygenase sirC leads to the production of the intermediate phomamide. This step is essential to form the reactive thiol group required for toxicity of sirodesmin PL. The next steps of sirodesmin biosynthesis are not well understood yet, but some predictions could be made from intermediate compounds identification. Phomamide is converted into phomalizarine via oxidation, probably by sirT. Further oxidation, methylation (by sirM or sirN) and reduction steps convert phomalizarine to deacetyl sirodesmin. Finally, acetyltransferase sirH probably acetylates deacetyl sirodesmin to produce sirodesmin PL. The protein is Cytochrome P450 monooxygenase sirE of Leptosphaeria maculans (Blackleg fungus).